A 303-amino-acid chain; its full sequence is MTWHILGAGSLGSLWAARLGRAGLPVRLILRDRQRLRRYQQAGGLSLVEDGQASLYPIAAETPDGGQPIQRLLLACKAYDAEEAASSVAHRLAGNAELLLLQNGLGSQQAVAARLPRSRCLFASSTEGAFRDGDFRVVFAGRGHTWLGDPRDTNAPAWLTQLSQAGIPHSWSDDILERLWRKLALNCAINPLTVLHDCRNGGLRQHPEEIAALCDELGQLLHASGYDAAARSLLEDVRAVIDATAANYSSMHQDVTRGRRTEIGYLLGYACQHGQRLGLPLPRLGTLLARLQAHLRQRGLPDR.

Residues 7 to 12 (GAGSLG), Arg-35, Asn-103, Ala-129, and Arg-131 each bind NADP(+). Asn-103 contributes to the substrate binding site. Lys-182 functions as the Proton donor in the catalytic mechanism. Substrate is bound by residues Asn-186, Asn-190, Asn-200, and Ser-250. Glu-262 lines the NADP(+) pocket.

Belongs to the ketopantoate reductase family.

The protein localises to the cytoplasm. The catalysed reaction is (R)-pantoate + NADP(+) = 2-dehydropantoate + NADPH + H(+). Its pathway is cofactor biosynthesis; (R)-pantothenate biosynthesis; (R)-pantoate from 3-methyl-2-oxobutanoate: step 2/2. Its function is as follows. Catalyzes the NADPH-dependent reduction of ketopantoate into pantoic acid. The chain is 2-dehydropantoate 2-reductase (panE) from Pseudomonas aeruginosa (strain ATCC 15692 / DSM 22644 / CIP 104116 / JCM 14847 / LMG 12228 / 1C / PRS 101 / PAO1).